A 200-amino-acid chain; its full sequence is Recombination protein RecR (200 aa).

The C4-type zinc finger occupies 59-74 (CEICGNIDTRSPCTVC). One can recognise a Toprim domain in the interval 82 to 177 (SIIVVVADVA…KVTRLAHGVP (96 aa)).

This sequence belongs to the RecR family.

May play a role in DNA repair. It seems to be involved in an RecBC-independent recombinational process of DNA repair. It may act with RecF and RecO. The protein is Recombination protein RecR of Nitrobacter hamburgensis (strain DSM 10229 / NCIMB 13809 / X14).